Consider the following 521-residue polypeptide: Cytochrome b5 reductase 4 (521 aa).

Met1 carries the N-acetylmethionine modification. The span at 1–18 shows a compositional bias: polar residues; sequence MLNVPSQSFPAPRSQQRV. A disordered region spans residues 1 to 27; that stretch reads MLNVPSQSFPAPRSQQRVASGGRSKVP. One can recognise a Cytochrome b5 heme-binding domain in the interval 54–130; it reads LIEVTEEELK…LKECLVGRMA (77 aa). His89 and His112 together coordinate heme. Residues 165–256 form the CS domain; the sequence is PSYPSYDWFQ…KENTSWDFLG (92 aa). In terms of domain architecture, FAD-binding FR-type spans 273-385; it reads LYYRKCQLIS…SSPEGNFKIS (113 aa). FAD is bound by residues 365-380 and 392-424; these read DRLQ…SPEG and DLFL…KVKL.

The protein belongs to the flavoprotein pyridine nucleotide cytochrome reductase family. The cofactor is FAD. Widely expressed.

The protein resides in the endoplasmic reticulum. The catalysed reaction is 2 Fe(III)-[cytochrome b5] + NADH = 2 Fe(II)-[cytochrome b5] + NAD(+) + H(+). NADH-cytochrome b5 reductase involved in endoplasmic reticulum stress response pathway. Plays a critical role in protecting pancreatic beta-cells against oxidant stress, possibly by protecting the cell from excess buildup of reactive oxygen species (ROS). Reduces a variety of substrates in vitro, such as cytochrome c, feericyanide and methemoglobin. In Homo sapiens (Human), this protein is Cytochrome b5 reductase 4.